Consider the following 752-residue polypeptide: Zinc finger protein 184 (752 aa).

The KRAB domain occupies 28–99 (VTFKDVIVDF…EPSIPVGTPG (72 aa)). Phosphoserine occurs at positions 117, 122, and 200. Lys207 participates in a covalent cross-link: Glycyl lysine isopeptide (Lys-Gly) (interchain with G-Cter in SUMO2). 19 consecutive C2H2-type zinc fingers follow at residues 223–245 (CKCN…QRTH), 251–273 (YKCN…QRIH), 279–301 (YKCD…QRIH), 307–329 (YKCD…QRIH), 335–357 (YTCN…QKIH), 363–385 (FKCD…QKIH), 391–413 (YKCN…HMIH), 419–441 (YECN…QKTH), 447–469 (YDCA…LKIH), 475–497 (YKCN…RRIH), 503–525 (FECS…QKTH), 531–553 (YECK…ERIH), 559–581 (YQCH…RKIH), 587–609 (YKCN…KRIH), 615–637 (YECA…QKTH), 643–665 (YHCN…QRIH), 671–693 (YKCN…QNTH), 699–721 (YNCN…QRIH), and 727–749 (FGCN…QRLH).

Belongs to the krueppel C2H2-type zinc-finger protein family.

It localises to the nucleus. In terms of biological role, may be involved in transcriptional regulation. The protein is Zinc finger protein 184 (ZNF184) of Bos taurus (Bovine).